A 166-amino-acid chain; its full sequence is Ribosome maturation factor RimM (166 aa).

The PRC barrel domain occupies 94-166 (EGEYYLGKLI…IELKVLDLLK (73 aa)).

This sequence belongs to the RimM family. Binds ribosomal protein uS19.

It localises to the cytoplasm. Its function is as follows. An accessory protein needed during the final step in the assembly of 30S ribosomal subunit, possibly for assembly of the head region. Essential for efficient processing of 16S rRNA. May be needed both before and after RbfA during the maturation of 16S rRNA. It has affinity for free ribosomal 30S subunits but not for 70S ribosomes. The sequence is that of Ribosome maturation factor RimM from Borreliella burgdorferi (strain ATCC 35210 / DSM 4680 / CIP 102532 / B31) (Borrelia burgdorferi).